We begin with the raw amino-acid sequence, 264 residues long: uncharacterized protein (264 aa).

A helical transmembrane segment spans residues 7–27; it reads LTLGICLVLLIILIVGYVIMT.

This sequence belongs to the staphylococcal tandem lipoprotein family.

The protein resides in the cell membrane. This is an uncharacterized protein from Staphylococcus aureus (strain MW2).